The primary structure comprises 1865 residues: Dedicator of cytokinesis protein 1 (1865 aa).

Residues 9–70 (REEKYGVAFY…PASYIHLKEA (62 aa)) enclose the SH3 domain. One can recognise a C2 DOCK-type domain in the interval 425-609 (RNDIYVTLVQ…DSFQISTLVC (185 aa)). The region spanning 1207-1617 (YKEIEREEMY…VEKEYGVRIM (411 aa)) is the DOCKER domain. 2 disordered regions span residues 1619–1716 (SSLD…EFKP) and 1732–1865 (TISP…GIVQ). The segment covering 1639 to 1666 (PSSSRPLSVASVSSLSSDSTPSRPGSDG) has biased composition (low complexity). The segment covering 1680-1694 (RSQDKLDKDDLEKEK) has biased composition (basic and acidic residues). Serine 1681 is modified (phosphoserine). A phosphoinositide-binding region spans residues 1687–1695 (KDDLEKEKK). Positions 1695–1704 (KDKKKEKRNS) are enriched in basic residues. The span at 1705 to 1716 (KHQEIFEKEFKP) shows a compositional bias: basic and acidic residues. 5 positions are modified to phosphoserine: serine 1743, serine 1751, serine 1756, serine 1761, and serine 1764. Low complexity predominate over residues 1756 to 1766 (SVSPSSPSSQQ). A phosphothreonine mark is found at threonine 1767 and threonine 1772. Residues 1793–1819 (ADVADVPPPLPLKGSVADYGNLMENQD) are interaction with NCK2 second and third SH3 domain (minor). An SH3-binding; interaction with CRK motif is present at residues 1799–1805 (PPPLPLK). The tract at residues 1820–1836 (LLGSPTPPPPPPHQRHL) is interaction with NCK2 third SH3 domain (major). Over residues 1824–1851 (PTPPPPPPHQRHLPPPLPSKTPPPPPPK) the composition is skewed to pro residues. The segment at 1837–1852 (PPPLPSKTPPPPPPKT) is interaction with NCK2 (minor). Residues 1838-1843 (PPLPSK) carry the SH3-binding; interaction with CRK motif. Residues 1855 to 1865 (KQASVDSGIVQ) show a composition bias toward polar residues. The residue at position 1858 (serine 1858) is a Phosphoserine.

This sequence belongs to the DOCK family. As to quaternary structure, interacts with the SH3 domains of CRK and NCK2 via multiple sites. Interacts with nucleotide-free RAC1 via its DOCKER domain. Interacts with ELMO1, ELMO2 and probably ELMO3 via its SH3 domain. Interacts with ADGRB1. Identified in a complex with AUTS2 and ELMO2. In terms of tissue distribution, highly expressed in placenta, lung, kidney, pancreas and ovary. Expressed at intermediate level in thymus, testes and colon.

The protein resides in the cytoplasm. It localises to the membrane. In terms of biological role, involved in cytoskeletal rearrangements required for phagocytosis of apoptotic cells and cell motility. Along with DOCK1, mediates CRK/CRKL regulation of epithelial and endothelial cell spreading and migration on type IV collagen. Functions as a guanine nucleotide exchange factor (GEF), which activates Rac Rho small GTPases by exchanging bound GDP for free GTP. Its GEF activity may be enhanced by ELMO1. The chain is Dedicator of cytokinesis protein 1 (DOCK1) from Homo sapiens (Human).